Here is a 642-residue protein sequence, read N- to C-terminus: UvrABC system protein C (642 aa).

One can recognise a GIY-YIG domain in the interval 20–97; the sequence is ERCGVYRMFD…IKKFQPKFNI (78 aa). In terms of domain architecture, UVR spans 207 to 242; it reads KELQENLSKKMEELSSQMRFEEAAEIRDRIKALSYV.

It belongs to the UvrC family. In terms of assembly, interacts with UvrB in an incision complex.

Its subcellular location is the cytoplasm. In terms of biological role, the UvrABC repair system catalyzes the recognition and processing of DNA lesions. UvrC both incises the 5' and 3' sides of the lesion. The N-terminal half is responsible for the 3' incision and the C-terminal half is responsible for the 5' incision. The chain is UvrABC system protein C from Rickettsia felis (strain ATCC VR-1525 / URRWXCal2) (Rickettsia azadi).